A 388-amino-acid chain; its full sequence is Protein kes1 (388 aa).

It belongs to the OSBP family.

Its function is as follows. Lipid transporter involved in lipid countertransport between the Golgi complex and membranes of the endoplasmic reticulum: specifically exchanges sterol with phosphatidylinositol 4-phosphate (PI4P), delivering sterol to the Golgi in exchange for PI4P, which is degraded by the SAC1 phosphatase in the endoplasmic reticulum. The polypeptide is Protein kes1 (kes1) (Schizosaccharomyces pombe (strain 972 / ATCC 24843) (Fission yeast)).